We begin with the raw amino-acid sequence, 362 residues long: Zinc phosphodiesterase ELAC protein 1 (362 aa).

7 residues coordinate Zn(2+): histidine 62, histidine 64, aspartate 66, histidine 67, histidine 181, aspartate 252, and histidine 312. Catalysis depends on aspartate 66, which acts as the Proton acceptor.

This sequence belongs to the RNase Z family. Homodimer. Zn(2+) is required as a cofactor.

Its subcellular location is the cytoplasm. The protein resides in the cytosol. It is found in the nucleus. The enzyme catalyses Endonucleolytic cleavage of RNA, removing extra 3' nucleotides from tRNA precursor, generating 3' termini of tRNAs. A 3'-hydroxy group is left at the tRNA terminus and a 5'-phosphoryl group is left at the trailer molecule.. Zinc phosphodiesterase, which displays some tRNA 3'-processing endonuclease activity. Specifically involved in tRNA repair: acts downstream of the ribosome-associated quality control (RQC) pathway by removing a 2',3'-cyclic phosphate from tRNAs following cleavage by ANKZF1. tRNAs are then processed by TRNT1. This is Zinc phosphodiesterase ELAC protein 1 (Elac1) from Mus musculus (Mouse).